Here is a 534-residue protein sequence, read N- to C-terminus: Prolyl 4-hydroxylase subunit alpha-1 (534 aa).

An N-terminal signal peptide occupies residues 1 to 17; that stretch reads MIWGVLMMGILLPQCSA. N113 carries an N-linked (GlcNAc...) asparagine glycan. A TPR repeat occupies 205–238; sequence VSVLDYLSYAVYQQGDLDKALLLTKKLLELDPEH. Residue N259 is glycosylated (N-linked (GlcNAc...) asparagine). A Fe2OG dioxygenase domain is found at 411 to 519; that stretch reads TAEELQVANY…KWVSNKWLHE (109 aa). Fe cation-binding residues include H429, D431, and H500. K510 serves as a coordination point for 2-oxoglutarate.

The protein belongs to the P4HA family. As to quaternary structure, heterotetramer of two alpha-1 chains and two beta chains (P4HB)(the beta chain is the multi-functional PDI), where P4HB plays the role of a structural subunit; this tetramer catalyzes the formation of 4-hydroxyproline in collagen. It depends on Fe(2+) as a cofactor. L-ascorbate serves as cofactor.

It localises to the endoplasmic reticulum lumen. The catalysed reaction is L-prolyl-[collagen] + 2-oxoglutarate + O2 = trans-4-hydroxy-L-prolyl-[collagen] + succinate + CO2. Functionally, catalyzes the post-translational formation of 4-hydroxyproline in -Xaa-Pro-Gly- sequences in collagens and other proteins. The protein is Prolyl 4-hydroxylase subunit alpha-1 (P4ha1) of Rattus norvegicus (Rat).